The following is a 260-amino-acid chain: Acetylglutamate kinase (260 aa).

Residues 46-47 (GG), Arg-68, and Asn-160 contribute to the substrate site.

It belongs to the acetylglutamate kinase family. ArgB subfamily.

The protein resides in the cytoplasm. The enzyme catalyses N-acetyl-L-glutamate + ATP = N-acetyl-L-glutamyl 5-phosphate + ADP. It functions in the pathway amino-acid biosynthesis; L-arginine biosynthesis; N(2)-acetyl-L-ornithine from L-glutamate: step 2/4. Functionally, catalyzes the ATP-dependent phosphorylation of N-acetyl-L-glutamate. The polypeptide is Acetylglutamate kinase (Shewanella putrefaciens (strain CN-32 / ATCC BAA-453)).